A 288-amino-acid chain; its full sequence is Energy-coupling factor transporter ATP-binding protein EcfA3 (288 aa).

The region spanning 3-245 (INFRNVSFSY…ESYLRKEKLR (243 aa)) is the ABC transporter domain. An ATP-binding site is contributed by 40 to 47 (GHTGSGKS).

It belongs to the ABC transporter superfamily. Energy-coupling factor EcfA family. As to quaternary structure, forms a stable energy-coupling factor (ECF) transporter complex composed of 2 membrane-embedded substrate-binding proteins (S component), 2 ATP-binding proteins (A component) and 2 transmembrane proteins (T component).

It is found in the cell membrane. Its function is as follows. ATP-binding (A) component of a common energy-coupling factor (ECF) ABC-transporter complex. Unlike classic ABC transporters this ECF transporter provides the energy necessary to transport a number of different substrates. This is Energy-coupling factor transporter ATP-binding protein EcfA3 from Oenococcus oeni (strain ATCC BAA-331 / PSU-1).